The chain runs to 181 residues: uncharacterized protein (181 aa).

A helical membrane pass occupies residues 133-153 (MCVCVHVCACVYVCMCVLVCM).

It is found in the membrane. This is an uncharacterized protein from Homo sapiens (Human).